A 205-amino-acid polypeptide reads, in one-letter code: Small ribosomal subunit protein uS4 (205 aa).

A compositionally biased stretch (basic and acidic residues) spans 1-16 (MSKRESSKYKIDRRMG). The disordered stretch occupies residues 1–46 (MSKRESSKYKIDRRMGENIWGRPKSPVNRREYGPGQHGQRRKGKLS). The region spanning 94-157 (SRLDAIVYRA…KQLVIVLEAV (64 aa)) is the S4 RNA-binding domain.

Belongs to the universal ribosomal protein uS4 family. In terms of assembly, part of the 30S ribosomal subunit. Contacts protein S5. The interaction surface between S4 and S5 is involved in control of translational fidelity.

Functionally, one of the primary rRNA binding proteins, it binds directly to 16S rRNA where it nucleates assembly of the body of the 30S subunit. Its function is as follows. With S5 and S12 plays an important role in translational accuracy. The chain is Small ribosomal subunit protein uS4 from Rhizobium johnstonii (strain DSM 114642 / LMG 32736 / 3841) (Rhizobium leguminosarum bv. viciae).